A 683-amino-acid chain; its full sequence is 1,4-alpha-glucan-branching enzyme (683 aa).

Positions 92 and 127 each coordinate (1,4-alpha-D-glucosyl)n. The active-site Nucleophile is Asp-342. The Proton donor role is filled by Glu-397.

It belongs to the glycosyl hydrolase 13 family. GlgB subfamily.

It localises to the cytoplasm. The enzyme catalyses Transfers a segment of a (1-&gt;4)-alpha-D-glucan chain to a primary hydroxy group in a similar glucan chain.. The protein operates within glycan biosynthesis; glycogen biosynthesis. In terms of biological role, glycogen-branching enzyme participates in the glycogen biosynthetic process along with glycogenin and glycogen synthase. Generates alpha-1,6-glucosidic branches from alpha-1,4-linked glucose chains, to increase solubility of the glycogen polymer. This Rhizophagus irregularis (strain DAOM 181602 / DAOM 197198 / MUCL 43194) (Arbuscular mycorrhizal fungus) protein is 1,4-alpha-glucan-branching enzyme (GLC3).